The sequence spans 248 residues: Ribonuclease PH (248 aa).

Phosphate-binding positions include R86 and 124-126 (GTR).

The protein belongs to the RNase PH family. In terms of assembly, homohexameric ring arranged as a trimer of dimers.

The catalysed reaction is tRNA(n+1) + phosphate = tRNA(n) + a ribonucleoside 5'-diphosphate. Its function is as follows. Phosphorolytic 3'-5' exoribonuclease that plays an important role in tRNA 3'-end maturation. Removes nucleotide residues following the 3'-CCA terminus of tRNAs; can also add nucleotides to the ends of RNA molecules by using nucleoside diphosphates as substrates, but this may not be physiologically important. Probably plays a role in initiation of 16S rRNA degradation (leading to ribosome degradation) during starvation. The chain is Ribonuclease PH from Clostridium perfringens (strain 13 / Type A).